The sequence spans 249 residues: Pleckstrin homology domain-containing family F member 2 (249 aa).

A Phosphoserine modification is found at S16. The 97-residue stretch at 35–131 folds into the PH domain; it reads VLIGEGVLTK…WMNHINKCVT (97 aa). Residue K44 is modified to N6-acetyllysine. An FYVE-type zinc finger spans residues 152–212; the sequence is DSEATVCMRC…ICDFCYDLLS (61 aa). Zn(2+) is bound by residues C158, C161, C175, C178, C183, C186, C204, and C207. The segment covering 221-233 has biased composition (polar residues); sequence PTRSDSYSQSLKS. Positions 221-249 are disordered; sequence PTRSDSYSQSLKSPLNDASDDDDDDDSSD. The segment covering 238–249 has biased composition (acidic residues); that stretch reads ASDDDDDDDSSD. Phosphoserine is present on residues S239 and S248.

May interact with EEA1. In terms of tissue distribution, expressed in brain, stomach and thymus, as well as in kidney, spleen, and skeletal muscle. Also expressed in peripheral blood mononuclear cells and dendritic cells.

It is found in the early endosome membrane. The protein localises to the endoplasmic reticulum. Functionally, may play a role in early endosome fusion upstream of RAB5, hence regulating receptor trafficking and fluid-phase transport. Enhances cellular sensitivity to TNF-induced apoptosis. The polypeptide is Pleckstrin homology domain-containing family F member 2 (Plekhf2) (Mus musculus (Mouse)).